The primary structure comprises 549 residues: Membrane protein insertase YidC (549 aa).

Residues 6-26 traverse the membrane as a helical segment; sequence NLLLIGLLLVSFMLWQSWMVD. Residues 35–55 form a disordered region; it reads ATAESSVPASSGGDVPNQNDA. A run of 4 helical transmembrane segments spans residues 349-369, 424-444, 462-482, and 503-523; these read QFLHGLVGNWGVAIILITMIV, LGGCFPLLIQMPIFIALYWTL, LSVKDPYYVLPLLMGATMWYI, and PIVFTFMFLWFPSGLTLYWVV.

It belongs to the OXA1/ALB3/YidC family. Type 1 subfamily. As to quaternary structure, interacts with the Sec translocase complex via SecD. Specifically interacts with transmembrane segments of nascent integral membrane proteins during membrane integration.

It localises to the cell inner membrane. Required for the insertion and/or proper folding and/or complex formation of integral membrane proteins into the membrane. Involved in integration of membrane proteins that insert both dependently and independently of the Sec translocase complex, as well as at least some lipoproteins. Aids folding of multispanning membrane proteins. The protein is Membrane protein insertase YidC of Tolumonas auensis (strain DSM 9187 / NBRC 110442 / TA 4).